Here is a 177-residue protein sequence, read N- to C-terminus: GTP-dependent dephospho-CoA kinase (177 aa).

GTP-binding residues include glycine 25, tyrosine 31, aspartate 48, valine 49, valine 50, aspartate 67, lysine 69, glutamate 124, and aspartate 147.

It belongs to the GTP-dependent DPCK family. In terms of assembly, monomer in solution.

The enzyme catalyses 3'-dephospho-CoA + GTP = GDP + CoA + H(+). The protein operates within cofactor biosynthesis; coenzyme A biosynthesis. Functionally, catalyzes the GTP-dependent phosphorylation of the 3'-hydroxyl group of dephosphocoenzyme A to form coenzyme A (CoA). Can also use UTP, with lower efficiency and has weak activity with ATP, but shows a strong preference for GTP as the phosphate donor. The chain is GTP-dependent dephospho-CoA kinase from Thermococcus kodakarensis (strain ATCC BAA-918 / JCM 12380 / KOD1) (Pyrococcus kodakaraensis (strain KOD1)).